The chain runs to 476 residues: Aspartyl/glutamyl-tRNA(Asn/Gln) amidotransferase subunit B (476 aa).

The protein belongs to the GatB/GatE family. GatB subfamily. In terms of assembly, heterotrimer of A, B and C subunits.

The catalysed reaction is L-glutamyl-tRNA(Gln) + L-glutamine + ATP + H2O = L-glutaminyl-tRNA(Gln) + L-glutamate + ADP + phosphate + H(+). The enzyme catalyses L-aspartyl-tRNA(Asn) + L-glutamine + ATP + H2O = L-asparaginyl-tRNA(Asn) + L-glutamate + ADP + phosphate + 2 H(+). Its function is as follows. Allows the formation of correctly charged Asn-tRNA(Asn) or Gln-tRNA(Gln) through the transamidation of misacylated Asp-tRNA(Asn) or Glu-tRNA(Gln) in organisms which lack either or both of asparaginyl-tRNA or glutaminyl-tRNA synthetases. The reaction takes place in the presence of glutamine and ATP through an activated phospho-Asp-tRNA(Asn) or phospho-Glu-tRNA(Gln). The protein is Aspartyl/glutamyl-tRNA(Asn/Gln) amidotransferase subunit B of Nitratidesulfovibrio vulgaris (strain ATCC 29579 / DSM 644 / CCUG 34227 / NCIMB 8303 / VKM B-1760 / Hildenborough) (Desulfovibrio vulgaris).